Consider the following 119-residue polypeptide: Beta-2-microglobulin (119 aa).

Residues 1–20 (MACFVVVALLVLLSLSGLEA) form the signal peptide. The 90-residue stretch at 25–114 (PKIQVYSRHP…VTFSTPKTVK (90 aa)) folds into the Ig-like C1-type domain. Cysteine 45 and cysteine 100 are oxidised to a cystine.

The protein belongs to the beta-2-microglobulin family. Heterodimer of an alpha chain and a beta chain. Beta-2-microglobulin is the beta-chain of major histocompatibility complex class I molecules.

The protein localises to the secreted. Functionally, component of the class I major histocompatibility complex (MHC). Involved in the presentation of peptide antigens to the immune system. This chain is Beta-2-microglobulin (B2M), found in Leontopithecus chrysopygus (Golden-rumped lion tamarin).